The primary structure comprises 446 residues: Probable glycine dehydrogenase (decarboxylating) subunit 1 (446 aa).

This sequence belongs to the GcvP family. N-terminal subunit subfamily. The glycine cleavage system is composed of four proteins: P, T, L and H. In this organism, the P 'protein' is a heterodimer of two subunits.

It catalyses the reaction N(6)-[(R)-lipoyl]-L-lysyl-[glycine-cleavage complex H protein] + glycine + H(+) = N(6)-[(R)-S(8)-aminomethyldihydrolipoyl]-L-lysyl-[glycine-cleavage complex H protein] + CO2. The glycine cleavage system catalyzes the degradation of glycine. The P protein binds the alpha-amino group of glycine through its pyridoxal phosphate cofactor; CO(2) is released and the remaining methylamine moiety is then transferred to the lipoamide cofactor of the H protein. The polypeptide is Probable glycine dehydrogenase (decarboxylating) subunit 1 (Thermococcus onnurineus (strain NA1)).